The following is a 207-amino-acid chain: Small ribosomal subunit protein uS4 (207 aa).

A disordered region spans residues 22–54; that stretch reads KSARRSISDKSKFESKPGQHGRTSGSRTSDFGL. The segment covering 27–38 has biased composition (basic and acidic residues); the sequence is SISDKSKFESKP. Residues 42-52 are compositionally biased toward polar residues; sequence GRTSGSRTSDF. Positions 97-157 constitute an S4 RNA-binding domain; the sequence is SRLDNVVYRM…EKSKKQLRII (61 aa).

It belongs to the universal ribosomal protein uS4 family. In terms of assembly, part of the 30S ribosomal subunit. Contacts protein S5. The interaction surface between S4 and S5 is involved in control of translational fidelity.

Its function is as follows. One of the primary rRNA binding proteins, it binds directly to 16S rRNA where it nucleates assembly of the body of the 30S subunit. With S5 and S12 plays an important role in translational accuracy. The sequence is that of Small ribosomal subunit protein uS4 from Leptothrix cholodnii (strain ATCC 51168 / LMG 8142 / SP-6) (Leptothrix discophora (strain SP-6)).